Consider the following 347-residue polypeptide: Protein RecA (347 aa).

65–72 (GPESSGKT) contributes to the ATP binding site.

The protein belongs to the RecA family.

Its subcellular location is the cytoplasm. In terms of biological role, can catalyze the hydrolysis of ATP in the presence of single-stranded DNA, the ATP-dependent uptake of single-stranded DNA by duplex DNA, and the ATP-dependent hybridization of homologous single-stranded DNAs. It interacts with LexA causing its activation and leading to its autocatalytic cleavage. The polypeptide is Protein RecA (Marinobacter nauticus (strain ATCC 700491 / DSM 11845 / VT8) (Marinobacter aquaeolei)).